The sequence spans 220 residues: 7-cyano-7-deazaguanine synthase (220 aa).

7 to 17 (LSGGLDSAVCL) serves as a coordination point for ATP. Residues Cys-191, Cys-199, Cys-202, and Cys-205 each contribute to the Zn(2+) site.

It belongs to the QueC family. As to quaternary structure, homodimer. Zn(2+) is required as a cofactor.

The catalysed reaction is 7-carboxy-7-deazaguanine + NH4(+) + ATP = 7-cyano-7-deazaguanine + ADP + phosphate + H2O + H(+). Its pathway is purine metabolism; 7-cyano-7-deazaguanine biosynthesis. Functionally, catalyzes the ATP-dependent conversion of 7-carboxy-7-deazaguanine (CDG) to 7-cyano-7-deazaguanine (preQ(0)). This is 7-cyano-7-deazaguanine synthase from Desulforudis audaxviator (strain MP104C).